Consider the following 195-residue polypeptide: Imidazoleglycerol-phosphate dehydratase (195 aa).

Belongs to the imidazoleglycerol-phosphate dehydratase family.

The protein localises to the cytoplasm. It catalyses the reaction D-erythro-1-(imidazol-4-yl)glycerol 3-phosphate = 3-(imidazol-4-yl)-2-oxopropyl phosphate + H2O. The protein operates within amino-acid biosynthesis; L-histidine biosynthesis; L-histidine from 5-phospho-alpha-D-ribose 1-diphosphate: step 6/9. In Geobacillus thermodenitrificans (strain NG80-2), this protein is Imidazoleglycerol-phosphate dehydratase.